Consider the following 115-residue polypeptide: NADH-ubiquinone oxidoreductase chain 3 (115 aa).

The next 3 membrane-spanning stretches (helical) occupy residues 3 to 23 (LMIT…IAFW), 55 to 75 (FFLV…LLPL), and 86 to 106 (LTLL…AYEW).

This sequence belongs to the complex I subunit 3 family. In terms of assembly, core subunit of respiratory chain NADH dehydrogenase (Complex I) which is composed of 45 different subunits. Interacts with TMEM186. Interacts with TMEM242.

The protein resides in the mitochondrion inner membrane. The catalysed reaction is a ubiquinone + NADH + 5 H(+)(in) = a ubiquinol + NAD(+) + 4 H(+)(out). Functionally, core subunit of the mitochondrial membrane respiratory chain NADH dehydrogenase (Complex I) which catalyzes electron transfer from NADH through the respiratory chain, using ubiquinone as an electron acceptor. Essential for the catalytic activity of complex I. This is NADH-ubiquinone oxidoreductase chain 3 from Loxodonta africana (African elephant).